A 541-amino-acid chain; its full sequence is Nectin 1b (541 aa).

The signal sequence occupies residues 1–21 (MDKQESFFVGHKSHRCSQNRS). Residues 22–396 (VSQIHQRTSR…PAELHSSGAA (375 aa)) are Extracellular-facing. N-linked (GlcNAc...) asparagine glycosylation is found at Asn51, Asn105, Asn180, Asn242, Asn326, Asn337, and Asn372. In terms of domain architecture, Ig-like V-type spans 77-182 (GDTVELKCLF…GNRENMVNLT (106 aa)). Cysteines 84 and 165 form a disulfide. 2 Ig-like C2-type domains span residues 187 to 282 (PVTK…VILN) and 287 to 374 (PEVK…VNVT). Cystine bridges form between Cys212–Cys266 and Cys309–Cys356. Residues 397 to 417 (IGGAVGGVALLVAAIALLVFF) traverse the membrane as a helical segment. Residues 418 to 541 (LRRRQRTFKG…SVISKKEWYV (124 aa)) lie on the Cytoplasmic side of the membrane. The segment at 440–507 (YSKAGGMPAH…VDEGESRDYD (68 aa)) is disordered. Over residues 479-493 (SGDRDFDGNSEDLKR) the composition is skewed to basic and acidic residues.

Belongs to the nectin family. As to quaternary structure, cis- and trans-homodimer. Can form trans-heterodimers. Expressed in the developing eye and nervous system.

The protein resides in the cell membrane. The protein localises to the cell junction. It is found in the adherens junction. Functionally, cell adhesion molecule that promotes cell-cell contacts and plays important roles in the development of the nervous system. Acts by forming homophilic or heterophilic trans-dimers. The chain is Nectin 1b from Danio rerio (Zebrafish).